We begin with the raw amino-acid sequence, 240 residues long: Alkaline phosphatase synthesis transcriptional regulatory protein PhoP (240 aa).

Residues 4–118 (KILVVDDEES…EVNARVKAIL (115 aa)) form the Response regulatory domain. The residue at position 53 (D53) is a 4-aspartylphosphate. The segment at residues 136–235 (EGQIVIGDLK…IRGLGYKLEE (100 aa)) is a DNA-binding region (ompR/PhoB-type).

Phosphorylated by PhoR.

The protein localises to the cytoplasm. Its function is as follows. Member of the two-component regulatory system PhoP/PhoR involved in the regulation of alkaline phosphatase genes phoA and phoB and of phosphodiesterase. This chain is Alkaline phosphatase synthesis transcriptional regulatory protein PhoP (phoP), found in Bacillus subtilis (strain 168).